The chain runs to 476 residues: DnaJ homolog subfamily C member 7 homolog (476 aa).

A disordered region spans residues 1-22 (MTEVETTHMNAGTESQQEPAEL). Residues 7–18 (THMNAGTESQQE) are compositionally biased toward polar residues. 7 TPR repeats span residues 23-56 (AEKQKAIGNAFYKEKKYAEAIKAYTEAIDLGSDS), 59-92 (AIYYSNRAATYMQIGEFELALCDAKQSDRIKPDV), 143-176 (MSWMYLKAQVYIFQNDMDRAQKIAHDVLRLNPKN), 177-210 (VEALVLRGKVMYYSGENAKAITHFQEALKLDPDC), 223-256 (LENTKNQGNDLFRQGNYQDAYEKYSEALQIDPDN), 261-294 (AKLYMNRATVLLRLKRPEEALSDSDNALAIDSSY), and 295-328 (LKGLKVRAKAHEALEKWEEAVRDVQSAIELDASD). The region spanning 349–414 (DHYKILGVSK…ESRRRFDSGV (66 aa)) is the J domain.

It is found in the cytoplasm. This Schizosaccharomyces pombe (strain 972 / ATCC 24843) (Fission yeast) protein is DnaJ homolog subfamily C member 7 homolog.